A 213-amino-acid polypeptide reads, in one-letter code: MSENNQCVIVGIAGASASGKSLIASTIYNELRAKVGDHQIGVITEDCYYKDQSHLSMEERVKTNYDHPSALDHDLLCQHLQMLARGEAVEVPEYSYTEHTRTEQTTTMTPKKVIILEGILLLTDPRLRDLMHATVFMDTPLDICLLRRVKRDVQERGRTMESVLKQYQETVRPMFMQFIEPSKQYADIIVPRGGKNRIAIDVLKAHIAKLLKS.

Gly-14–Ser-21 is a binding site for ATP.

This sequence belongs to the uridine kinase family.

Its subcellular location is the cytoplasm. It carries out the reaction uridine + ATP = UMP + ADP + H(+). The enzyme catalyses cytidine + ATP = CMP + ADP + H(+). The protein operates within pyrimidine metabolism; CTP biosynthesis via salvage pathway; CTP from cytidine: step 1/3. Its pathway is pyrimidine metabolism; UMP biosynthesis via salvage pathway; UMP from uridine: step 1/1. The sequence is that of Uridine kinase from Vibrio cholerae serotype O1 (strain ATCC 39315 / El Tor Inaba N16961).